The following is a 545-amino-acid chain: Glutamine-dependent NAD(+) synthetase (545 aa).

The region spanning 5-247 is the CN hydrolase domain; the sequence is LRIAMAQFDF…DQWLVVDYMR (243 aa). E46 serves as the catalytic Proton acceptor; for glutaminase activity. Catalysis depends on K113, which acts as the For glutaminase activity. Y119 provides a ligand contact to L-glutamine. The Nucleophile; for glutaminase activity role is filled by C151. L-glutamine-binding residues include S177 and K183. The segment at 269 to 545 is ligase; it reads VWRAVVRGVQ…RYPISNAYRG (277 aa). Residue 292 to 299 participates in ATP binding; the sequence is GLSGGIDS. Residue N375 coordinates deamido-NAD(+). ATP is bound at residue T399. Positions 404 and 516 each coordinate deamido-NAD(+).

In the C-terminal section; belongs to the NAD synthetase family.

The catalysed reaction is deamido-NAD(+) + L-glutamine + ATP + H2O = L-glutamate + AMP + diphosphate + NAD(+) + H(+). It functions in the pathway cofactor biosynthesis; NAD(+) biosynthesis; NAD(+) from deamido-NAD(+) (L-Gln route): step 1/1. Its function is as follows. Catalyzes the ATP-dependent amidation of deamido-NAD to form NAD. Uses L-glutamine as a nitrogen source. The polypeptide is Glutamine-dependent NAD(+) synthetase (Xylella fastidiosa (strain 9a5c)).